Here is a 258-residue protein sequence, read N- to C-terminus: UPF0246 protein HI_0984 (258 aa).

The protein belongs to the UPF0246 family.

This is UPF0246 protein HI_0984 from Haemophilus influenzae (strain ATCC 51907 / DSM 11121 / KW20 / Rd).